The sequence spans 324 residues: CYFIP-related Rac1 interactor B (324 aa).

G2 is lipidated: N-myristoyl glycine. K74 participates in a covalent cross-link: Glycyl lysine isopeptide (Lys-Gly) (interchain with G-Cter in ubiquitin).

It belongs to the CYRI family. Interacts with RAC1 (GTP-bound form preferentially). In terms of processing, ubiquitinated at Lys-74 upon Salmonella bacterial infection. Expressed in pancreatic ducts (at protein level).

It localises to the membrane. It is found in the mitochondrion. Its function is as follows. Negatively regulates RAC1 signaling and RAC1-driven cytoskeletal remodeling. Regulates chemotaxis, cell migration and epithelial polarization by controlling the polarity, plasticity, duration and extent of protrusions. Limits Rac1 mediated activation of the Scar/WAVE complex, focuses protrusion signals and regulates pseudopod complexity by inhibiting Scar/WAVE-induced actin polymerization. Protects against Salmonella bacterial infection. Attenuates processes such as macropinocytosis, phagocytosis and cell migration and restrict sopE-mediated bacterial entry. Also restricts infection mediated by Mycobacterium tuberculosis and Listeria monocytogenes. Involved in the regulation of mitochondrial dynamics and oxidative stress. The protein is CYFIP-related Rac1 interactor B (Cyrib) of Mus musculus (Mouse).